The following is a 110-amino-acid chain: Replication initiation control protein YabA (110 aa).

Zn(2+) contacts are provided by H84, C86, C100, and C103.

Belongs to the YabA family. In terms of assembly, homotetramer. Interacts with both DnaA and DnaN, acting as a bridge between these two proteins. Requires Zn(2+) as cofactor.

It is found in the cytoplasm. The protein localises to the nucleoid. Its function is as follows. Involved in control of chromosome replication initiation. Inhibits the cooperative binding of DnaA to the oriC region, thus negatively regulating initiation of chromosome replication. Inhibits the ability of DnaA-ATP to form a helix on DNA; does not disassemble preformed DnaA-DNA helices. Decreases the residence time of DnaA on the chromosome at its binding sites (oriC, replication forks and promoter-binding sites). Tethers DnaA to the replication machinery via the DNA polymerase beta sliding clamp subunit (dnaN). Associates with oriC and other DnaA targets on the chromosome in a DnaA-dependent manner. The sequence is that of Replication initiation control protein YabA from Streptococcus mutans serotype c (strain ATCC 700610 / UA159).